Consider the following 60-residue polypeptide: UPF0337 protein SACOL1680 (60 aa).

The protein belongs to the UPF0337 (CsbD) family.

The polypeptide is UPF0337 protein SACOL1680 (Staphylococcus aureus (strain COL)).